A 109-amino-acid chain; its full sequence is U-scoloptoxin(16)-Ssd1a (109 aa).

Residues 1-23 (MTTSATVIIMVLCVGSLVIFSEG) form the signal peptide.

Contains 4 disulfide bonds. In terms of tissue distribution, expressed by the venom gland.

The protein resides in the secreted. The sequence is that of U-scoloptoxin(16)-Ssd1a from Scolopendra dehaani (Thai centipede).